Consider the following 86-residue polypeptide: Large ribosomal subunit protein eL31 (86 aa).

Belongs to the eukaryotic ribosomal protein eL31 family.

The sequence is that of Large ribosomal subunit protein eL31 from Methanopyrus kandleri (strain AV19 / DSM 6324 / JCM 9639 / NBRC 100938).